Reading from the N-terminus, the 207-residue chain is Large ribosomal subunit protein uL4 (207 aa).

The segment at 48-75 (THSVKNRSAVRGGGRKPWRQKGTGRARQ) is disordered. Over residues 60 to 71 (GGRKPWRQKGTG) the composition is skewed to basic residues.

The protein belongs to the universal ribosomal protein uL4 family. Part of the 50S ribosomal subunit.

In terms of biological role, one of the primary rRNA binding proteins, this protein initially binds near the 5'-end of the 23S rRNA. It is important during the early stages of 50S assembly. It makes multiple contacts with different domains of the 23S rRNA in the assembled 50S subunit and ribosome. Functionally, forms part of the polypeptide exit tunnel. This chain is Large ribosomal subunit protein uL4, found in Staphylococcus carnosus (strain TM300).